Reading from the N-terminus, the 702-residue chain is Glucosidase 2 subunit beta (702 aa).

Positions 1 to 20 are cleaved as a signal peptide; it reads MVSMFSLFLLLIEQSPLVAS. The N-linked (GlcNAc...) asparagine glycan is linked to N145. Residues 163-228 are a coiled coil; it reads SYREGKEALE…LRGEYFNQLS (66 aa). N-linked (GlcNAc...) asparagine glycans are attached at residues N240 and N358. Residues 435 to 457 form a disordered region; that stretch reads PKVLPPDAVESEQDTNSDHIGTS. Residues 478 to 517 are a coiled coil; the sequence is KDLVSLEKRFRSCESQVSLLENELKQKMDYKKLLDETEDE. Residues N520 and N525 are each glycosylated (N-linked (GlcNAc...) asparagine). The MRH domain occupies 537–689; it reads SYCLDDILDN…DVVGPLGCNK (153 aa). Intrachain disulfides connect C539/C552, C646/C675, and C660/C687. 2 N-linked (GlcNAc...) asparagine glycosylation sites follow: N688 and N699.

In terms of assembly, heterodimer of a catalytic subunit alpha (ROT2) and a subunit beta (GTB1).

It localises to the endoplasmic reticulum. Subunit of glucosidase 2, which cleaves sequentially the 2 innermost alpha-1,3-linked glucose residues from the Glc(2)Man(9)GlcNAc(2) oligosaccharide precursor of immature glycoproteins. Specifically required for the cleavage of the final glucose. The protein is Glucosidase 2 subunit beta (GTB1) of Saccharomyces cerevisiae (strain ATCC 204508 / S288c) (Baker's yeast).